A 61-amino-acid polypeptide reads, in one-letter code: Sec-independent protein translocase protein TatA (61 aa).

Residues 1 to 21 form a helical membrane-spanning segment; that stretch reads MFGLGITEILLILGIIILIFG.

It belongs to the TatA/E family. The Tat system comprises two distinct complexes: a TatABC complex, containing multiple copies of TatA, TatB and TatC subunits, and a separate TatA complex, containing only TatA subunits. Substrates initially bind to the TatABC complex, which probably triggers association of the separate TatA complex to form the active translocon.

The protein localises to the cell inner membrane. In terms of biological role, part of the twin-arginine translocation (Tat) system that transports large folded proteins containing a characteristic twin-arginine motif in their signal peptide across membranes. TatA could form the protein-conducting channel of the Tat system. The chain is Sec-independent protein translocase protein TatA from Maridesulfovibrio salexigens (strain ATCC 14822 / DSM 2638 / NCIMB 8403 / VKM B-1763) (Desulfovibrio salexigens).